The primary structure comprises 461 residues: Photosystem II CP43 reaction center protein (461 aa).

A propeptide spanning residues 1–2 is cleaved from the precursor; sequence ME. Position 3 is an N-acetylthreonine (Thr-3). Thr-3 is subject to Phosphothreonine. 5 helical membrane passes run 57–81, 122–143, 166–188, 243–263, and 279–300; these read LFEVAHFVPEKPMYEQGLILLPHLA, LLGPETLEESFPFFGYVWKDRN, KALYFGGVYDTWAPGGGDVRKIS, KPFAWARRALVWSGEAYLSYS, and WFNNTAYPSEFYGPTGPEASQA. Glu-355 is a [CaMn4O5] cluster binding site. The chain crosses the membrane as a helical span at residues 435–459; that stretch reads RARAAAAGFEKGIDRDFEPVLSMTP.

Belongs to the PsbB/PsbC family. PsbC subfamily. In terms of assembly, PSII is composed of 1 copy each of membrane proteins PsbA, PsbB, PsbC, PsbD, PsbE, PsbF, PsbH, PsbI, PsbJ, PsbK, PsbL, PsbM, PsbT, PsbX, PsbY, PsbZ, Psb30/Ycf12, at least 3 peripheral proteins of the oxygen-evolving complex and a large number of cofactors. It forms dimeric complexes. Binds multiple chlorophylls and provides some of the ligands for the Ca-4Mn-5O cluster of the oxygen-evolving complex. It may also provide a ligand for a Cl- that is required for oxygen evolution. PSII binds additional chlorophylls, carotenoids and specific lipids. is required as a cofactor.

Its subcellular location is the plastid. It is found in the chloroplast thylakoid membrane. One of the components of the core complex of photosystem II (PSII). It binds chlorophyll and helps catalyze the primary light-induced photochemical processes of PSII. PSII is a light-driven water:plastoquinone oxidoreductase, using light energy to abstract electrons from H(2)O, generating O(2) and a proton gradient subsequently used for ATP formation. This chain is Photosystem II CP43 reaction center protein, found in Trachelium caeruleum (Blue throatwort).